A 364-amino-acid polypeptide reads, in one-letter code: Aminomethyltransferase (364 aa).

It belongs to the GcvT family. In terms of assembly, the glycine cleavage system is composed of four proteins: P, T, L and H.

It catalyses the reaction N(6)-[(R)-S(8)-aminomethyldihydrolipoyl]-L-lysyl-[protein] + (6S)-5,6,7,8-tetrahydrofolate = N(6)-[(R)-dihydrolipoyl]-L-lysyl-[protein] + (6R)-5,10-methylene-5,6,7,8-tetrahydrofolate + NH4(+). Functionally, the glycine cleavage system catalyzes the degradation of glycine. The chain is Aminomethyltransferase from Shewanella putrefaciens (strain CN-32 / ATCC BAA-453).